A 461-amino-acid chain; its full sequence is ATP synthase subunit beta (461 aa).

An ATP-binding site is contributed by 151–158; it reads GGAGVGKT.

Belongs to the ATPase alpha/beta chains family. As to quaternary structure, F-type ATPases have 2 components, CF(1) - the catalytic core - and CF(0) - the membrane proton channel. CF(1) has five subunits: alpha(3), beta(3), gamma(1), delta(1), epsilon(1). CF(0) has three main subunits: a(1), b(2) and c(9-12). The alpha and beta chains form an alternating ring which encloses part of the gamma chain. CF(1) is attached to CF(0) by a central stalk formed by the gamma and epsilon chains, while a peripheral stalk is formed by the delta and b chains.

It is found in the cell inner membrane. The enzyme catalyses ATP + H2O + 4 H(+)(in) = ADP + phosphate + 5 H(+)(out). Functionally, produces ATP from ADP in the presence of a proton gradient across the membrane. The catalytic sites are hosted primarily by the beta subunits. The polypeptide is ATP synthase subunit beta (Coxiella burnetii (strain Dugway 5J108-111)).